The sequence spans 368 residues: Polynucleotide 5'-hydroxyl-kinase NOL9 (368 aa).

36-43 (GPKNSGKS) is a binding site for ATP.

This sequence belongs to the Clp1 family. NOL9/GRC3 subfamily.

The protein resides in the nucleus. The protein localises to the nucleolus. Its function is as follows. Polynucleotide 5'-kinase involved in rRNA processing. The polypeptide is Polynucleotide 5'-hydroxyl-kinase NOL9 (Arabidopsis thaliana (Mouse-ear cress)).